The chain runs to 287 residues: Probable 3-hydroxybutyryl-CoA dehydrogenase (287 aa).

It belongs to the 3-hydroxyacyl-CoA dehydrogenase family.

The catalysed reaction is (3S)-3-hydroxybutanoyl-CoA + NADP(+) = acetoacetyl-CoA + NADPH + H(+). Its pathway is lipid metabolism; butanoate metabolism. The sequence is that of Probable 3-hydroxybutyryl-CoA dehydrogenase (mmgB) from Bacillus subtilis (strain 168).